We begin with the raw amino-acid sequence, 222 residues long: Pre-mRNA cleavage factor Im 25 kDa subunit 1 (222 aa).

Residues 67–194 enclose the Nudix hydrolase domain; it reads GLRTCVEAVL…KLLAVPLCQL (128 aa). Residues 94–96 are interaction with RNA; sequence SIF. Positions 101–122 match the Nudix box motif; it reads GRLRPGESDIEGLKRKLASKLS.

Belongs to the Nudix hydrolase family. CPSF5 subfamily. As to quaternary structure, homodimer. Component of the cleavage factor Im (CFIm) complex. Forms a complex with cleavage and polyadenylation specificity factor (CPSF) subunits FIPS5.

The protein localises to the nucleus. Component of the cleavage factor Im (CFIm) complex that plays a key role in pre-mRNA 3'-processing. Involved in association with CPSF6 or CPSF7 in pre-MRNA 3'-end poly(A) site cleavage and poly(A) addition. NUDT21/CPSF5 binds to cleavage and polyadenylation RNA substrates. The homodimer mediates simultaneous sequence-specific recognition of two 5'-UGUA-3' elements within the pre-mRNA. Binds to, but does not hydrolyze mono- and di-adenosine nucleotides. May have a role in mRNA export. In Arabidopsis thaliana (Mouse-ear cress), this protein is Pre-mRNA cleavage factor Im 25 kDa subunit 1.